The primary structure comprises 192 residues: MYHLGDEYSQKAKREGYLARSVYKLIEINEKFSLFSSGNVLDIGASPGSFSQYAYKKLKRGVLVSVDINDISLRYVNNFYFIKGDIFSDDTASKINKFGPYSLVISDVAPKTTGNRLVDTSNSFNLNMRIIDLSFEVLLKKGNLLVKVFQGGDEMQIFKKFEKYFKFVKKIRPKAVRKNSFEIYFLGKSFGK.

The S-adenosyl-L-methionine site is built by Gly-48, Phe-50, Asp-67, Asp-85, and Asp-107. Catalysis depends on Lys-147, which acts as the Proton acceptor.

It belongs to the class I-like SAM-binding methyltransferase superfamily. RNA methyltransferase RlmE family.

The protein localises to the cytoplasm. It carries out the reaction uridine(2552) in 23S rRNA + S-adenosyl-L-methionine = 2'-O-methyluridine(2552) in 23S rRNA + S-adenosyl-L-homocysteine + H(+). In terms of biological role, specifically methylates the uridine in position 2552 of 23S rRNA at the 2'-O position of the ribose in the fully assembled 50S ribosomal subunit. The sequence is that of Ribosomal RNA large subunit methyltransferase E from Borrelia garinii subsp. bavariensis (strain ATCC BAA-2496 / DSM 23469 / PBi) (Borreliella bavariensis).